The sequence spans 559 residues: Frizzled-5 (559 aa).

The N-terminal stretch at 1–26 is a signal peptide; it reads MGSFRSGVFALSFVVLLLDYFAPAQA. Residues 27 to 220 are Extracellular-facing; the sequence is ASKAIVCQEI…QPYFTQDEKM (194 aa). An FZ domain is found at 28–149; the sequence is SKAIVCQEIT…GDPDTLCMYY (122 aa). Cystine bridges form between cysteine 33–cysteine 94, cysteine 41–cysteine 87, cysteine 78–cysteine 116, cysteine 105–cysteine 146, and cysteine 109–cysteine 133. Asparagine 47 is a glycosylation site (N-linked (GlcNAc...) asparagine). A glycan (N-linked (GlcNAc...) asparagine) is linked at asparagine 150. Residues 221–241 form a helical membrane-spanning segment; it reads FVTFWIGLWSILCFISTFTTV. The Cytoplasmic portion of the chain corresponds to 242 to 257; sequence ATFLIDMERFRYPERP. Residues 258–278 form a helical membrane-spanning segment; sequence IIFLSACYLFVSIGYVVRLIV. Topologically, residues 279-301 are extracellular; the sequence is GHENVACNKDHIHYETTGPALCT. A helical membrane pass occupies residues 302 to 322; that stretch reads IVFLLIYFFGMASSIWWVILT. Residues 323-343 lie on the Cytoplasmic side of the membrane; that stretch reads FTWFLAAGMKWGNEAIASYSQ. The chain crosses the membrane as a helical span at residues 344–364; that stretch reads YFHMAAWLIPSVKSIAVLALS. The Extracellular segment spans residues 365–387; sequence SVDGDPVAGICYVGNQNLDNLRG. The chain crosses the membrane as a helical span at residues 388–408; that stretch reads FVLAPLVVYLFSGTMFLLAGF. Topologically, residues 409–434 are cytoplasmic; the sequence is VSLFRIRSVIKQGGTKTDKLEKLMIR. The chain crosses the membrane as a helical span at residues 435-455; the sequence is IGIFSVLYTVPATIVVACYIY. Over 456–483 the chain is Extracellular; sequence EQHYREHWEKTHNCSCPGDKQRYRPDYA. Asparagine 468 is a glycosylation site (N-linked (GlcNAc...) asparagine). A helical membrane pass occupies residues 484-504; sequence VFMLKYLMCLVVGITSGVWIW. Topologically, residues 505–559 are cytoplasmic; that stretch reads SGKTLESWKRFTGRCCRNSKPINASAYSEASRALTPRTGLSNLTLPHKQVPLSHV. Residues 507-512 carry the Lys-Thr-X-X-X-Trp motif, mediates interaction with the PDZ domain of Dvl family members motif; it reads KTLESW. The short motif at 557 to 559 is the PDZ-binding element; the sequence is SHV.

It belongs to the G-protein coupled receptor Fz/Smo family. In terms of tissue distribution, expressed in retina.

Its subcellular location is the cell membrane. The protein localises to the golgi apparatus membrane. Receptor for Wnt proteins that functions in the canonical Wnt/beta-catenin signaling pathway. The canonical Wnt/beta-catenin signaling pathway leads to the activation of disheveled proteins, inhibition of GSK-3 kinase, nuclear accumulation of beta-catenin and activation of Wnt target genes. A second signaling pathway involving PKC and calcium fluxes has been seen for some family members, but it is not yet clear if it represents a distinct pathway or if it can be integrated in the canonical pathway, as PKC seems to be required for Wnt-mediated inactivation of GSK-3 kinase. Both pathways seem to involve interactions with G-proteins. May be involved in transduction and intercellular transmission of polarity information during tissue morphogenesis and/or in differentiated tissues. The chain is Frizzled-5 (fzd5) from Xenopus laevis (African clawed frog).